A 218-amino-acid polypeptide reads, in one-letter code: uncharacterized protein (218 aa).

Composition is skewed to polar residues over residues methionine 1–phenylalanine 21 and leucine 68–isoleucine 102. 3 disordered regions span residues methionine 1–serine 39, glutamate 63–glycine 116, and glycine 170–glutamine 205. A compositionally biased stretch (basic and acidic residues) spans lysine 183–histidine 195.

This is an uncharacterized protein from Caenorhabditis elegans.